The sequence spans 689 residues: E3 ubiquitin-protein ligase RNF43 (689 aa).

Residues 1–27 (MNRARLQLASLWLLLTVTLQAVASAMG) form the signal peptide. Over 28-191 (TTEREMDVKA…VQEQPKWLHH (164 aa)) the chain is Extracellular. 2 N-linked (GlcNAc...) asparagine glycosylation sites follow: N56 and N86. Residues C85 and C113 are joined by a disulfide bond. A helical transmembrane segment spans residues 192-212 (DIWILLTVAGTVMFFVLYAVA). Residues 213-689 (RLLCRQPPPQ…EIEAVCEHAV (477 aa)) lie on the Cytoplasmic side of the membrane. An RING-type; atypical zinc finger spans residues 268 to 308 (CAICLEEFTDGQELRILPCCHEYHLGCVDPWLRQNHTCPLC). Disordered regions lie at residues 386–430 (QMRT…HGSS), 445–467 (TSSS…ALAS), and 492–639 (VHFH…MSES). Composition is skewed to low complexity over residues 408 to 430 (DSSG…HGSS) and 446 to 461 (SSSS…EDSS). Basic residues-rich tracts occupy residues 492–504 (VHFH…HYRR) and 512–523 (SHPHRSKRRTKV). A compositionally biased stretch (polar residues) spans 574–588 (QQSMPQAASVVQGSS).

It belongs to the ZNRF3 family.

Its subcellular location is the cell membrane. The protein resides in the endoplasmic reticulum membrane. It localises to the nucleus envelope. The enzyme catalyses S-ubiquitinyl-[E2 ubiquitin-conjugating enzyme]-L-cysteine + [acceptor protein]-L-lysine = [E2 ubiquitin-conjugating enzyme]-L-cysteine + N(6)-ubiquitinyl-[acceptor protein]-L-lysine.. It participates in protein modification; protein ubiquitination. Its function is as follows. E3 ubiquitin-protein ligase that acts as a negative regulator of the Wnt signaling pathway by mediating the ubiquitination, endocytosis and subsequent degradation of Wnt receptor complex components Frizzled. Acts on both canonical and non-canonical Wnt signaling pathway. Along with RSPO2 and ZNRF3, constitutes a master switch that governs limb specification. This is E3 ubiquitin-protein ligase RNF43 (rnf43) from Xenopus tropicalis (Western clawed frog).